A 644-amino-acid polypeptide reads, in one-letter code: Acetyl-coenzyme A synthetase (644 aa).

CoA is bound by residues 189–192 and Thr307; that span reads RGGK. ATP contacts are provided by residues 383–385, 407–412, Asp496, and Arg511; these read GEP and DTWWQT. CoA is bound at residue Ser519. Arg522 is a binding site for ATP. 3 residues coordinate Mg(2+): Val533, His535, and Val538. Arg580 provides a ligand contact to CoA. Lys605 is modified (N6-acetyllysine).

Belongs to the ATP-dependent AMP-binding enzyme family. The cofactor is Mg(2+). Acetylated. Deacetylation by the SIR2-homolog deacetylase activates the enzyme.

The catalysed reaction is acetate + ATP + CoA = acetyl-CoA + AMP + diphosphate. Catalyzes the conversion of acetate into acetyl-CoA (AcCoA), an essential intermediate at the junction of anabolic and catabolic pathways. AcsA undergoes a two-step reaction. In the first half reaction, AcsA combines acetate with ATP to form acetyl-adenylate (AcAMP) intermediate. In the second half reaction, it can then transfer the acetyl group from AcAMP to the sulfhydryl group of CoA, forming the product AcCoA. This is Acetyl-coenzyme A synthetase from Rubrobacter xylanophilus (strain DSM 9941 / JCM 11954 / NBRC 16129 / PRD-1).